We begin with the raw amino-acid sequence, 207 residues long: Large ribosomal subunit protein uL3 (207 aa).

It belongs to the universal ribosomal protein uL3 family. As to quaternary structure, part of the 50S ribosomal subunit. Forms a cluster with proteins L14 and L19.

Functionally, one of the primary rRNA binding proteins, it binds directly near the 3'-end of the 23S rRNA, where it nucleates assembly of the 50S subunit. The sequence is that of Large ribosomal subunit protein uL3 from Desulforapulum autotrophicum (strain ATCC 43914 / DSM 3382 / VKM B-1955 / HRM2) (Desulfobacterium autotrophicum).